We begin with the raw amino-acid sequence, 1174 residues long: Probable pyruvate-flavodoxin oxidoreductase (1174 aa).

4Fe-4S ferredoxin-type domains lie at 680–709 and 736–765; these read EIPI…AKVV and YVLQ…NPEI. [4Fe-4S] cluster-binding residues include cysteine 689, cysteine 692, cysteine 695, cysteine 699, cysteine 745, cysteine 748, cysteine 751, cysteine 755, cysteine 819, cysteine 822, cysteine 847, and cysteine 1071.

This sequence belongs to the pyruvate:ferredoxin/flavodoxin oxidoreductase family. It depends on [4Fe-4S] cluster as a cofactor.

The enzyme catalyses oxidized [flavodoxin] + pyruvate + CoA + 2 H(+) = reduced [flavodoxin] + acetyl-CoA + CO2. Its function is as follows. Oxidoreductase required for the transfer of electrons from pyruvate to flavodoxin. The protein is Probable pyruvate-flavodoxin oxidoreductase (ydbK) of Escherichia coli (strain K12).